We begin with the raw amino-acid sequence, 530 residues long: Ubiquitin carboxyl-terminal hydrolase 17-like protein 19 (530 aa).

The 296-residue stretch at A80–K375 folds into the USP domain. C89 acts as the Nucleophile in catalysis. H334 functions as the Proton acceptor in the catalytic mechanism. 2 stretches are compositionally biased toward basic and acidic residues: residues S382 to R392 and D398 to P413. Disordered regions lie at residues S382–P413 and K476–Q530. Over residues S484 to T495 the composition is skewed to low complexity. The span at H496–L505 shows a compositional bias: polar residues. The span at G510–R524 shows a compositional bias: basic residues.

The protein belongs to the peptidase C19 family. USP17 subfamily.

It localises to the nucleus. Its subcellular location is the endoplasmic reticulum. It carries out the reaction Thiol-dependent hydrolysis of ester, thioester, amide, peptide and isopeptide bonds formed by the C-terminal Gly of ubiquitin (a 76-residue protein attached to proteins as an intracellular targeting signal).. Functionally, deubiquitinating enzyme that removes conjugated ubiquitin from specific proteins to regulate different cellular processes that may include cell proliferation, progression through the cell cycle, apoptosis, cell migration, and the cellular response to viral infection. The sequence is that of Ubiquitin carboxyl-terminal hydrolase 17-like protein 19 (USP17L19) from Homo sapiens (Human).